The chain runs to 175 residues: CDP-archaeol synthase (175 aa).

4 helical membrane-spanning segments follow: residues 41-61 (GLFS…WLSS), 82-102 (LIVV…KSFF), 122-142 (FVVG…VSNF), and 150-170 (VIII…LIGV).

Belongs to the CDP-archaeol synthase family. It depends on Mg(2+) as a cofactor.

Its subcellular location is the cell membrane. The enzyme catalyses 2,3-bis-O-(geranylgeranyl)-sn-glycerol 1-phosphate + CTP + H(+) = CDP-2,3-bis-O-(geranylgeranyl)-sn-glycerol + diphosphate. The protein operates within membrane lipid metabolism; glycerophospholipid metabolism. In terms of biological role, catalyzes the formation of CDP-2,3-bis-(O-geranylgeranyl)-sn-glycerol (CDP-archaeol) from 2,3-bis-(O-geranylgeranyl)-sn-glycerol 1-phosphate (DGGGP) and CTP. This reaction is the third ether-bond-formation step in the biosynthesis of archaeal membrane lipids. The protein is CDP-archaeol synthase of Methanosarcina barkeri (strain Fusaro / DSM 804).